A 335-amino-acid polypeptide reads, in one-letter code: Glycerol-3-phosphate dehydrogenase [NAD(P)+] (335 aa).

NADPH is bound by residues W12 and K106. Sn-glycerol 3-phosphate is bound by residues K106, G136, and S138. Residue A140 participates in NADPH binding. Residues K191, D244, S254, R255, and N256 each contribute to the sn-glycerol 3-phosphate site. Catalysis depends on K191, which acts as the Proton acceptor. Residue R255 participates in NADPH binding. Positions 279 and 281 each coordinate NADPH.

It belongs to the NAD-dependent glycerol-3-phosphate dehydrogenase family.

The protein resides in the cytoplasm. It catalyses the reaction sn-glycerol 3-phosphate + NAD(+) = dihydroxyacetone phosphate + NADH + H(+). It carries out the reaction sn-glycerol 3-phosphate + NADP(+) = dihydroxyacetone phosphate + NADPH + H(+). It participates in membrane lipid metabolism; glycerophospholipid metabolism. Functionally, catalyzes the reduction of the glycolytic intermediate dihydroxyacetone phosphate (DHAP) to sn-glycerol 3-phosphate (G3P), the key precursor for phospholipid synthesis. In Fusobacterium nucleatum subsp. nucleatum (strain ATCC 25586 / DSM 15643 / BCRC 10681 / CIP 101130 / JCM 8532 / KCTC 2640 / LMG 13131 / VPI 4355), this protein is Glycerol-3-phosphate dehydrogenase [NAD(P)+].